A 263-amino-acid chain; its full sequence is uncharacterized protein (263 aa).

Belongs to the AtsA family.

The protein localises to the plastid. Its subcellular location is the chloroplast. This is an uncharacterized protein from Pyropia yezoensis (Susabi-nori).